Consider the following 461-residue polypeptide: D-phenylhydantoinase (461 aa).

Positions 59, 61, and 151 each coordinate a divalent metal cation. N6-carboxylysine is present on K151. Y156 lines the substrate pocket. The a divalent metal cation site is built by H182 and H239. S286 is a binding site for substrate. D313 provides a ligand contact to a divalent metal cation. N335 is a substrate binding site.

It belongs to the metallo-dependent hydrolases superfamily. Hydantoinase/dihydropyrimidinase family. As to quaternary structure, homotetramer. It depends on a divalent metal cation as a cofactor. In terms of processing, carboxylation allows a single lysine to coordinate two divalent metal cations.

It catalyses the reaction D-5-phenylhydantoin + H2O = N-carbamoyl-D-phenylglycine + H(+). Catalyzes the stereospecific hydrolysis of the cyclic amide bond of D-hydantoin derivatives with an aromatic side chains at the 5'-position. Has no activity on dihydropyrimidines. The physiological function is unknown. This is D-phenylhydantoinase from Escherichia coli O127:H6 (strain E2348/69 / EPEC).